Consider the following 435-residue polypeptide: D-amino acid dehydrogenase (435 aa).

Position 3-17 (3-17 (VLILGSGVIGTTSAW)) interacts with FAD.

The protein belongs to the DadA oxidoreductase family. FAD serves as cofactor.

It carries out the reaction a D-alpha-amino acid + A + H2O = a 2-oxocarboxylate + AH2 + NH4(+). The protein operates within amino-acid degradation; D-alanine degradation; NH(3) and pyruvate from D-alanine: step 1/1. Oxidative deamination of D-amino acids. The polypeptide is D-amino acid dehydrogenase (Xylella fastidiosa (strain M23)).